A 966-amino-acid chain; its full sequence is Translation initiation factor IF-2 (966 aa).

Basic and acidic residues-rich tracts occupy residues 99 to 113 (KRDEAGADQHNEAAD), 123 to 183 (EQAR…KAEE), 197 to 212 (DASRKKAEDEQARVAV), 220 to 249 (AADDAKAAADKARAEQDAARKRREAAEAEA), and 266 to 277 (PSERKAEEKKAE). Residues 99 to 382 (KRDEAGADQH…NFQAPTEPVV (284 aa)) are disordered. The span at 304-315 (AATTTTTTATTT) shows a compositional bias: low complexity. Residues 346–359 (SSGGVGGWRGGPRG) are compositionally biased toward gly residues. One can recognise a tr-type G domain in the interval 466–635 (PRPPVVTVMG…LLQAEVLELK (170 aa)). The tract at residues 475–482 (GHVDHGKT) is G1. Residue 475–482 (GHVDHGKT) coordinates GTP. Residues 500-504 (GITQH) are G2. Residues 521 to 524 (DTPG) are G3. GTP contacts are provided by residues 521-525 (DTPGH) and 575-578 (NKID). The G4 stretch occupies residues 575-578 (NKID). Positions 611–613 (SAK) are G5.

It belongs to the TRAFAC class translation factor GTPase superfamily. Classic translation factor GTPase family. IF-2 subfamily.

The protein resides in the cytoplasm. Functionally, one of the essential components for the initiation of protein synthesis. Protects formylmethionyl-tRNA from spontaneous hydrolysis and promotes its binding to the 30S ribosomal subunits. Also involved in the hydrolysis of GTP during the formation of the 70S ribosomal complex. The sequence is that of Translation initiation factor IF-2 from Cupriavidus pinatubonensis (strain JMP 134 / LMG 1197) (Cupriavidus necator (strain JMP 134)).